We begin with the raw amino-acid sequence, 458 residues long: Glycine--tRNA ligase (458 aa).

2 residues coordinate substrate: Arg97 and Glu171. Residues 203–205 (RNE), 213–218 (FRTREF), 287–288 (EL), and 331–334 (GADR) each bind ATP. 218–222 (FEQME) provides a ligand contact to substrate. 327-331 (EPSLG) is a binding site for substrate.

The protein belongs to the class-II aminoacyl-tRNA synthetase family. Homodimer.

The protein localises to the cytoplasm. It catalyses the reaction tRNA(Gly) + glycine + ATP = glycyl-tRNA(Gly) + AMP + diphosphate. In terms of biological role, catalyzes the attachment of glycine to tRNA(Gly). The chain is Glycine--tRNA ligase from Bacillus thuringiensis subsp. konkukian (strain 97-27).